Here is a 672-residue protein sequence, read N- to C-terminus: GPI mannosyltransferase pigv-1 (672 aa).

The Cytoplasmic portion of the chain corresponds to Met1–Arg134. Basic and acidic residues predominate over residues Arg82 to Ser94. Positions Arg82–Glu115 are disordered. The segment covering Gly97 to Thr107 has biased composition (low complexity). A helical membrane pass occupies residues Gln135 to Gly155. At Asp156 to Thr239 the chain is on the extracellular side. Residues Phe240–Leu260 form a helical membrane-spanning segment. At Cys261–Lys277 the chain is on the cytoplasmic side. Transmembrane regions (helical) follow at residues Ile278–Ala298 and Tyr299–Leu319. At Arg320 to Arg345 the chain is on the extracellular side. A helical transmembrane segment spans residues Ser346–Asp366. Residues Glu367–Thr423 lie on the Cytoplasmic side of the membrane. The chain crosses the membrane as a helical span at residues Leu424–Phe444. Residues Met445 to Lys520 lie on the Extracellular side of the membrane. A helical membrane pass occupies residues Ile521–Ile541. Topologically, residues Lys542–Pro569 are cytoplasmic. The chain crosses the membrane as a helical span at residues Met570 to Phe590. At Thr591–Arg592 the chain is on the extracellular side. A helical transmembrane segment spans residues Ile593–Thr613. Over Gln614–Lys648 the chain is Cytoplasmic. A helical transmembrane segment spans residues Leu649–Leu669. The Extracellular segment spans residues Pro670–Thr672.

It belongs to the PIGV family. Expressed in epithelial tissues including the epidermis, pharynx, intestine, rectum and excretory cell during embryogenesis.

The protein localises to the endoplasmic reticulum membrane. The protein operates within glycolipid biosynthesis; glycosylphosphatidylinositol-anchor biosynthesis. Functionally, alpha-1,6-mannosyltransferase involved in glycosylphosphatidylinositol-anchor biosynthesis. Transfers the second mannose to the glycosylphosphatidylinositol during GPI precursor assembly. Required for maintenance of epithelial integrity during embryogenesis. This chain is GPI mannosyltransferase pigv-1, found in Caenorhabditis elegans.